A 590-amino-acid polypeptide reads, in one-letter code: Aspartate--tRNA(Asp/Asn) ligase (590 aa).

Glu-176 contributes to the L-aspartate binding site. Residues Gln-200–Lys-203 are aspartate. L-aspartate contacts are provided by Arg-222 and His-451. Residue Arg-222 to Glu-224 coordinates ATP. An ATP-binding site is contributed by Glu-485. Residue Arg-492 coordinates L-aspartate. Residue Gly-537 to Arg-540 coordinates ATP.

It belongs to the class-II aminoacyl-tRNA synthetase family. Type 1 subfamily. As to quaternary structure, homodimer.

Its subcellular location is the cytoplasm. The enzyme catalyses tRNA(Asx) + L-aspartate + ATP = L-aspartyl-tRNA(Asx) + AMP + diphosphate. Aspartyl-tRNA synthetase with relaxed tRNA specificity since it is able to aspartylate not only its cognate tRNA(Asp) but also tRNA(Asn). Reaction proceeds in two steps: L-aspartate is first activated by ATP to form Asp-AMP and then transferred to the acceptor end of tRNA(Asp/Asn). This chain is Aspartate--tRNA(Asp/Asn) ligase, found in Ehrlichia canis (strain Jake).